The chain runs to 173 residues: Crossover junction endodeoxyribonuclease RuvC (173 aa).

Catalysis depends on residues aspartate 8, glutamate 67, and aspartate 139. The Mg(2+) site is built by aspartate 8, glutamate 67, and aspartate 139.

Belongs to the RuvC family. In terms of assembly, homodimer which binds Holliday junction (HJ) DNA. The HJ becomes 2-fold symmetrical on binding to RuvC with unstacked arms; it has a different conformation from HJ DNA in complex with RuvA. In the full resolvosome a probable DNA-RuvA(4)-RuvB(12)-RuvC(2) complex forms which resolves the HJ. The cofactor is Mg(2+).

Its subcellular location is the cytoplasm. It carries out the reaction Endonucleolytic cleavage at a junction such as a reciprocal single-stranded crossover between two homologous DNA duplexes (Holliday junction).. Its function is as follows. The RuvA-RuvB-RuvC complex processes Holliday junction (HJ) DNA during genetic recombination and DNA repair. Endonuclease that resolves HJ intermediates. Cleaves cruciform DNA by making single-stranded nicks across the HJ at symmetrical positions within the homologous arms, yielding a 5'-phosphate and a 3'-hydroxyl group; requires a central core of homology in the junction. The consensus cleavage sequence is 5'-(A/T)TT(C/G)-3'. Cleavage occurs on the 3'-side of the TT dinucleotide at the point of strand exchange. HJ branch migration catalyzed by RuvA-RuvB allows RuvC to scan DNA until it finds its consensus sequence, where it cleaves and resolves the cruciform DNA. The sequence is that of Crossover junction endodeoxyribonuclease RuvC from Aeromonas hydrophila subsp. hydrophila (strain ATCC 7966 / DSM 30187 / BCRC 13018 / CCUG 14551 / JCM 1027 / KCTC 2358 / NCIMB 9240 / NCTC 8049).